The following is a 332-amino-acid chain: L-lactate dehydrogenase A chain (332 aa).

NAD(+) contacts are provided by residues 29–57 and R99; that span reads GAVGMACAISILMKDLADELALVDVIEDK. 3 residues coordinate substrate: R106, N138, and R169. Position 138 (N138) interacts with NAD(+). Catalysis depends on H193, which acts as the Proton acceptor. T248 is a binding site for substrate.

This sequence belongs to the LDH/MDH superfamily. LDH family. In terms of assembly, homotetramer.

The protein resides in the cytoplasm. It carries out the reaction (S)-lactate + NAD(+) = pyruvate + NADH + H(+). It participates in fermentation; pyruvate fermentation to lactate; (S)-lactate from pyruvate: step 1/1. In terms of biological role, interconverts simultaneously and stereospecifically pyruvate and lactate with concomitant interconversion of NADH and NAD(+). This chain is L-lactate dehydrogenase A chain (LDHA), found in Pelodiscus sinensis japonicus (Chinese soft-shelled turtle).